The chain runs to 300 residues: Probable mitochondrial 2-oxodicarboxylate carrier (300 aa).

The segment at 1 to 20 is disordered; the sequence is MTSKGNAGNPPTPTPAPVKS. 3 Solcar repeats span residues 21-104, 114-200, and 209-295; these read QPLW…YEKQ, PTQM…IKSA, and GVLV…VMKL. A run of 6 helical transmembrane segments spans residues 27–47, 74–93, 120–140, 171–191, 209–229, and 278–298; these read LVSGGIAGVSEILVMYPLDVV, LKMYRGIVPPILVEAPKRAI, IGSGVLAGITEAFIVVPFELV, GFFKGLESTIWRHACWNGGYF, GVLVNNFIAGGLAGTFGTMLN, and LGPGGGILLVVNEFVMKLLAG.

The protein belongs to the mitochondrial carrier (TC 2.A.29) family.

Its subcellular location is the mitochondrion inner membrane. The enzyme catalyses 2-oxoadipate(in) + 2-oxoglutarate(out) = 2-oxoadipate(out) + 2-oxoglutarate(in). It catalyses the reaction hexanedioate(in) + 2-oxoglutarate(out) = hexanedioate(out) + 2-oxoglutarate(in). The catalysed reaction is L-2-aminoadipate(in) + 2-oxoglutarate(out) = L-2-aminoadipate(out) + 2-oxoglutarate(in). It carries out the reaction glutarate(in) + 2-oxoglutarate(out) = glutarate(out) + 2-oxoglutarate(in). The enzyme catalyses 2-oxoheptanedioate(in) + 2-oxoglutarate(out) = 2-oxoheptanedioate(out) + 2-oxoglutarate(in). It catalyses the reaction heptanedioate(in) + 2-oxoglutarate(out) = heptanedioate(out) + 2-oxoglutarate(in). The catalysed reaction is citrate(in) + 2-oxoglutarate(out) = citrate(out) + 2-oxoglutarate(in). Its function is as follows. Transports dicarboxylates across the inner membranes of mitochondria by a counter-exchange mechanism. Can transport 2-oxoadipate (2-oxohexanedioate), 2-oxoglutarate, adipate (hexanedioate), glutarate, and to a lesser extent, pimelate (heptanedioate), 2-oxopimelate (2-oxoheptanedioate), 2-aminoadipate (2-aminohexanedioate), oxaloacetate, and citrate. Plays a central role in catabolism of lysine, hydroxylysine, and tryptophan, by transporting common metabolite intermediates (such as 2-oxoadipate) into the mitochondria, where it is converted into acetyl-CoA and can enter the citric acid (TCA) cycle. The protein is Probable mitochondrial 2-oxodicarboxylate carrier (mcfT) of Dictyostelium discoideum (Social amoeba).